We begin with the raw amino-acid sequence, 167 residues long: DNA-directed RNA polymerase 19 kDa subunit (167 aa).

Residues 15 to 41 (DNDYKSYDEDDDSISDIGETSDDCCTT) form a disordered region. Residues 22–36 (DEDDDSISDIGETSD) show a composition bias toward acidic residues.

The protein belongs to the poxviridae DNA-directed RNA polymerase 19 kDa subunit family. In terms of assembly, the DNA-dependent RNA polymerase used for intermediate and late genes expression consists of eight subunits (147) kDa, 133 kDa, 35 kDa, 30 kDa, 22 kDa, 19 kDa, 18 kDa and 7 kDa totalling more than 500 kDa in mass. The same holoenzyme, with the addition of the transcription-specificity factor RAP94, is used for early gene expression.

Its subcellular location is the virion. It carries out the reaction RNA(n) + a ribonucleoside 5'-triphosphate = RNA(n+1) + diphosphate. Part of the DNA-dependent RNA polymerase which catalyzes the transcription of viral DNA into RNA using the four ribonucleoside triphosphates as substrates. Responsible for the transcription of early, intermediate and late genes. DNA-dependent RNA polymerase associates with the early transcription factor (ETF) thereby allowing the early genes transcription. Late transcription, and probably also intermediate transcription, require newly synthesized RNA polymerase. The polypeptide is DNA-directed RNA polymerase 19 kDa subunit (RPO19) (Vertebrata (FPV)).